Here is a 394-residue protein sequence, read N- to C-terminus: Elongation factor Tu (394 aa).

A tr-type G domain is found at 10-204; sequence KPHVNIGTIG…AVDSWIPLPE (195 aa). The G1 stretch occupies residues 19 to 26; the sequence is GHVDHGKT. 19 to 26 provides a ligand contact to GTP; sequence GHVDHGKT. Thr26 serves as a coordination point for Mg(2+). The tract at residues 60–64 is G2; that stretch reads GITIN. Residues 81–84 form a G3 region; that stretch reads DCPG. Residues 81–85 and 136–139 each bind GTP; these read DCPGH and NKCD. The tract at residues 136 to 139 is G4; that stretch reads NKCD. Positions 174 to 176 are G5; sequence SGL.

Belongs to the TRAFAC class translation factor GTPase superfamily. Classic translation factor GTPase family. EF-Tu/EF-1A subfamily. Monomer.

It is found in the cytoplasm. The enzyme catalyses GTP + H2O = GDP + phosphate + H(+). In terms of biological role, GTP hydrolase that promotes the GTP-dependent binding of aminoacyl-tRNA to the A-site of ribosomes during protein biosynthesis. The protein is Elongation factor Tu of Ureaplasma urealyticum serovar 10 (strain ATCC 33699 / Western).